The primary structure comprises 155 residues: Small ribosomal subunit protein uS7c (155 aa).

The protein belongs to the universal ribosomal protein uS7 family. Part of the 30S ribosomal subunit.

Its subcellular location is the plastid. The protein localises to the chloroplast. Functionally, one of the primary rRNA binding proteins, it binds directly to 16S rRNA where it nucleates assembly of the head domain of the 30S subunit. The sequence is that of Small ribosomal subunit protein uS7c (rps7) from Lactoris fernandeziana.